The primary structure comprises 420 residues: D-tagatose-1,6-bisphosphate aldolase subunit GatZ (420 aa).

Belongs to the GatZ/KbaZ family. GatZ subfamily. As to quaternary structure, forms a complex with GatY.

It participates in carbohydrate metabolism; D-tagatose 6-phosphate degradation; D-glyceraldehyde 3-phosphate and glycerone phosphate from D-tagatose 6-phosphate: step 2/2. Its function is as follows. Component of the tagatose-1,6-bisphosphate aldolase GatYZ that is required for full activity and stability of the Y subunit. Could have a chaperone-like function for the proper and stable folding of GatY. When expressed alone, GatZ does not show any aldolase activity. Is involved in the catabolism of galactitol. The sequence is that of D-tagatose-1,6-bisphosphate aldolase subunit GatZ from Escherichia coli O9:H4 (strain HS).